The chain runs to 352 residues: Histidinol-phosphate aminotransferase (352 aa).

Position 211 is an N6-(pyridoxal phosphate)lysine (Lys-211).

This sequence belongs to the class-II pyridoxal-phosphate-dependent aminotransferase family. Histidinol-phosphate aminotransferase subfamily. Homodimer. Pyridoxal 5'-phosphate serves as cofactor.

It catalyses the reaction L-histidinol phosphate + 2-oxoglutarate = 3-(imidazol-4-yl)-2-oxopropyl phosphate + L-glutamate. The protein operates within amino-acid biosynthesis; L-histidine biosynthesis; L-histidine from 5-phospho-alpha-D-ribose 1-diphosphate: step 7/9. The sequence is that of Histidinol-phosphate aminotransferase from Haemophilus influenzae (strain PittGG).